The sequence spans 341 residues: S-adenosylmethionine:tRNA ribosyltransferase-isomerase (341 aa).

Belongs to the QueA family. In terms of assembly, monomer.

The protein resides in the cytoplasm. The enzyme catalyses 7-aminomethyl-7-carbaguanosine(34) in tRNA + S-adenosyl-L-methionine = epoxyqueuosine(34) in tRNA + adenine + L-methionine + 2 H(+). The protein operates within tRNA modification; tRNA-queuosine biosynthesis. Transfers and isomerizes the ribose moiety from AdoMet to the 7-aminomethyl group of 7-deazaguanine (preQ1-tRNA) to give epoxyqueuosine (oQ-tRNA). This chain is S-adenosylmethionine:tRNA ribosyltransferase-isomerase, found in Clostridium botulinum (strain Loch Maree / Type A3).